The sequence spans 311 residues: MEGGYEQGGGASRYFHNLFRPEIHHQQLQPQGGINLIDQHHHQHQQHQQQQQPSDDSRESDHSNKDHHQQGRPDSDPNTSSSAPGKRPRGRPPGSKNKAKPPIIVTRDSPNALRSHVLEVSPGADIVESVSTYARRRGRGVSVLGGNGTVSNVTLRQPVTPGNGGGVSGGGGVVTLHGRFEILSLTGTVLPPPAPPGAGGLSIFLAGGQGQVVGGSVVAPLIASAPVILMAASFSNAVFERLPIEEEEEEGGGGGGGGGGGPPQMQQAPSASPPSGVTGQGQLGGNVGGYGFSGDPHLLGWGAGTPSRPPF.

Residues 40–105 (HHHQHQQHQQ…KNKAKPPIIV (66 aa)) are disordered. Residues 55 to 75 (DDSRESDHSNKDHHQQGRPDS) show a composition bias toward basic and acidic residues. The a.T hook DNA-binding region spans 86 to 98 (KRPRGRPPGSKNK). Residues 110–258 (PNALRSHVLE…EEGGGGGGGG (149 aa)) form the PPC domain. The required for the binding to non-AHL interactors stretch occupies residues 178 to 183 (GRFEIL). The tract at residues 246 to 311 (EEEEEGGGGG…GAGTPSRPPF (66 aa)) is disordered. Residues 252 to 262 (GGGGGGGGGGP) show a composition bias toward gly residues. Residues 263–277 (PQMQQAPSASPPSGV) show a composition bias toward low complexity. The segment covering 278-292 (TGQGQLGGNVGGYGF) has biased composition (gly residues).

In terms of assembly, homodimer. Interacts with AHL12, AHL25, AHL29, TCP4, TCP13, EF114, ATAF2/NAC081, histone H2B.1, histone H3.3 and histone H4. In terms of tissue distribution, expressed in the hypocotyl and the vascular tissue of seedling.

The protein localises to the nucleus. Transcription factor that specifically binds AT-rich DNA sequences related to the nuclear matrix attachment regions (MARs). Negatively regulates plant innate immunity (PTI) to pathogens through the down-regulation of the PAMP-triggered FRK1 expression. Acts redundantly with AHL18, AHL22 and AHL29 in the regulation of flowering and regulation of the hypocotyl elongation. Acts as a chromatin remodeling factor that negatively regulates the leaf senescence. Acts redundantly with AHL29/SOB3 to modulate hypocotyl growth inhibition in response to light. The protein is AT-hook motif nuclear-localized protein 27 of Arabidopsis thaliana (Mouse-ear cress).